Reading from the N-terminus, the 377-residue chain is Fructose-bisphosphate aldolase 1, chloroplastic (377 aa).

Residues Arg-74 and Lys-164 each coordinate substrate. The active-site Proton acceptor is Glu-204. Lys-246 acts as the Schiff-base intermediate with dihydroxyacetone-P in catalysis.

Belongs to the class I fructose-bisphosphate aldolase family.

The protein localises to the plastid. It localises to the chloroplast. It catalyses the reaction beta-D-fructose 1,6-bisphosphate = D-glyceraldehyde 3-phosphate + dihydroxyacetone phosphate. It functions in the pathway carbohydrate degradation; glycolysis; D-glyceraldehyde 3-phosphate and glycerone phosphate from D-glucose: step 4/4. The protein is Fructose-bisphosphate aldolase 1, chloroplastic (ALDCHL) of Chlamydomonas reinhardtii (Chlamydomonas smithii).